The chain runs to 323 residues: Dehydrogenase/reductase SDR family member 7B (323 aa).

Over 1–17 (MISPSFRKGMLKERVMD) the chain is Cytoplasmic. Residues 18-38 (LASQTTILPLLFGCLGIFSLF) traverse the membrane as a helical; Signal-anchor for type II membrane protein segment. At 39 to 323 (RLLQRIRSKA…ARKERKSKSS (285 aa)) the chain is on the lumenal side. NAD(+) contacts are provided by Ser-62 and Leu-64. Ser-192 provides a ligand contact to substrate. NAD(+)-binding residues include Tyr-205, Lys-209, and Thr-240. Tyr-205 functions as the Proton acceptor in the catalytic mechanism.

It belongs to the short-chain dehydrogenases/reductases (SDR) family.

The protein localises to the endoplasmic reticulum membrane. Functionally, putative oxidoreductase. The protein is Dehydrogenase/reductase SDR family member 7B of Mus musculus (Mouse).